A 252-amino-acid polypeptide reads, in one-letter code: MAFASDESASPWSSTRLAALNAQFEPHGPKAILNWATHTFGDDLAQGTGFGPSGIVIMHMLADLRPGTTVFYLDTDLLFPETYELCDDLDERLDVDVTRVHGGLSLDEQAEQEGEELWNRNPNRCCFLRKVKPLRNFLDDRRAWITGVRRDQSERRADTDILSWEGQYGVFKINPLANWTQKEVWKYLFEHDLPYNPKHDQGYPSLGCVPCTEPVDQADGYSREGRWSDRDKTECGLHTSPEDEDGAHAAES.

[4Fe-4S] cluster-binding residues include C125, C126, C208, and C211. The disordered stretch occupies residues 219–252 (DGYSREGRWSDRDKTECGLHTSPEDEDGAHAAES). A compositionally biased stretch (basic and acidic residues) spans 221 to 235 (YSREGRWSDRDKTEC). Catalysis depends on C235, which acts as the Nucleophile; cysteine thiosulfonate intermediate.

Belongs to the PAPS reductase family. CysH subfamily. Requires [4Fe-4S] cluster as cofactor.

It localises to the cytoplasm. The catalysed reaction is [thioredoxin]-disulfide + sulfite + AMP + 2 H(+) = adenosine 5'-phosphosulfate + [thioredoxin]-dithiol. The protein operates within sulfur metabolism; hydrogen sulfide biosynthesis; sulfite from sulfate. Catalyzes the formation of sulfite from adenosine 5'-phosphosulfate (APS) using thioredoxin as an electron donor. This is Adenosine 5'-phosphosulfate reductase from Salinibacter ruber (strain DSM 13855 / M31).